The following is a 329-amino-acid chain: MQNLKEITEQARAALDELHDKGLDALEAFRVEYFGKKGHFTQLMQSLRNVAAEERPAVGAKINEAKQAVLDILNAKKEAFEKAALNAQLEKERIDVSLPGRKVELGGLHPVSLTIERVTKFFSELGFSVESGPEIESDYYNFDALNIPKHHPARADHDTFWFNPELLLRTQTSGVQIRTMEKKQPPIRIMVPGKVYRNDYDQTHTPMFHQIELLYEDKKVNFTELKGVLYDFLRAFFEEDLQVRFRPSYFPFTEPSAEVDIMGKNGKWLEVLGCGMVHPNVLRSVGIDPNEYSGFAAGMGVERLTMLRYNVTDLRSFFENDLRFLKQFK.

Mg(2+) is bound at residue glutamate 254.

Belongs to the class-II aminoacyl-tRNA synthetase family. Phe-tRNA synthetase alpha subunit type 1 subfamily. Tetramer of two alpha and two beta subunits. It depends on Mg(2+) as a cofactor.

It localises to the cytoplasm. It catalyses the reaction tRNA(Phe) + L-phenylalanine + ATP = L-phenylalanyl-tRNA(Phe) + AMP + diphosphate + H(+). The polypeptide is Phenylalanine--tRNA ligase alpha subunit (Mannheimia succiniciproducens (strain KCTC 0769BP / MBEL55E)).